Reading from the N-terminus, the 282-residue chain is 1D-myo-inositol 2-acetamido-2-deoxy-alpha-D-glucopyranoside deacetylase (282 aa).

3 residues coordinate Zn(2+): His6, Asp9, and His141.

Belongs to the MshB deacetylase family. Zn(2+) serves as cofactor.

It carries out the reaction 1D-myo-inositol 2-acetamido-2-deoxy-alpha-D-glucopyranoside + H2O = 1D-myo-inositol 2-amino-2-deoxy-alpha-D-glucopyranoside + acetate. Its function is as follows. Catalyzes the deacetylation of 1D-myo-inositol 2-acetamido-2-deoxy-alpha-D-glucopyranoside (GlcNAc-Ins) in the mycothiol biosynthesis pathway. This chain is 1D-myo-inositol 2-acetamido-2-deoxy-alpha-D-glucopyranoside deacetylase, found in Nocardiopsis dassonvillei (strain ATCC 23218 / DSM 43111 / CIP 107115 / JCM 7437 / KCTC 9190 / NBRC 14626 / NCTC 10488 / NRRL B-5397 / IMRU 509) (Actinomadura dassonvillei).